We begin with the raw amino-acid sequence, 589 residues long: ATP-dependent lipid A-core flippase (589 aa).

The next 5 helical transmembrane spans lie at 29 to 49, 68 to 88, 157 to 177, 254 to 274, and 283 to 303; these read WLLV…STFL, ALWL…AGYI, VIGA…AILL, ISSA…LLIA, and LSPG…PALK. An ABC transmembrane type-1 domain is found at 32–314; it reads VVAACGALLE…LTNVQNMLQS (283 aa). Residues 346-582 form the ABC transporter domain; it reads IEFRGITARY…DGLYAYLYSM (237 aa). An ATP-binding site is contributed by 380 to 387; that stretch reads GRSGSGKS.

This sequence belongs to the ABC transporter superfamily. Lipid exporter (TC 3.A.1.106) family. As to quaternary structure, homodimer.

It localises to the cell inner membrane. The enzyme catalyses ATP + H2O + lipid A-core oligosaccharideSide 1 = ADP + phosphate + lipid A-core oligosaccharideSide 2.. Its function is as follows. Involved in lipopolysaccharide (LPS) biosynthesis. Translocates lipid A-core from the inner to the outer leaflet of the inner membrane. Transmembrane domains (TMD) form a pore in the inner membrane and the ATP-binding domain (NBD) is responsible for energy generation. The protein is ATP-dependent lipid A-core flippase of Xylella fastidiosa (strain Temecula1 / ATCC 700964).